Consider the following 347-residue polypeptide: Haptoglobin (347 aa).

An N-terminal signal peptide occupies residues 1 to 18; it reads MSALGAVIALLLWGQLFA. One can recognise a Sushi domain in the interval 31-88; it reads DGCPKPPEIANGYVEHLVRYQCKKYYRLRTEGDGVYTLNNEKQWTNKAVGDKLPECEA. Intrachain disulfides connect cysteine 52/cysteine 86, cysteine 90/cysteine 207, cysteine 250/cysteine 281, and cysteine 292/cysteine 322. Positions 103-345 constitute a Peptidase S1 domain; the sequence is ILGGHLDAKG…IQDWVQKTIA (243 aa). N-linked (GlcNAc...) asparagine glycosylation is found at asparagine 125, asparagine 148, asparagine 152, and asparagine 182. The tract at residues 259 to 264 is interaction with CD163; sequence VPEKKT.

It belongs to the peptidase S1 family. As to quaternary structure, tetramer of two alpha and two beta chains; disulfide-linked. The hemoglobin/haptoglobin complex is composed of a haptoglobin dimer bound to two hemoglobin alpha-beta dimers. Interacts with CD163. Interacts with ERGIC3. Expressed by the liver and secreted in plasma.

Its subcellular location is the secreted. In terms of biological role, as a result of hemolysis, hemoglobin is found to accumulate in the kidney and is secreted in the urine. Haptoglobin captures, and combines with free plasma hemoglobin to allow hepatic recycling of heme iron and to prevent kidney damage. Haptoglobin also acts as an antioxidant, has antibacterial activity and plays a role in modulating many aspects of the acute phase response. Hemoglobin/haptoglobin complexes are rapidly cleared by the macrophage CD163 scavenger receptor expressed on the surface of liver Kupfer cells through an endocytic lysosomal degradation pathway. The protein is Haptoglobin (HP) of Ateles geoffroyi (Black-handed spider monkey).